We begin with the raw amino-acid sequence, 207 residues long: Cytochrome bo(3) ubiquinol oxidase subunit 3 (207 aa).

Residues Met1–Gln26 lie on the Cytoplasmic side of the membrane. A helical transmembrane segment spans residues Met27–Phe47. At Ala48 to Asp70 the chain is on the periplasmic side. Residues Phe71–Leu91 traverse the membrane as a helical segment. Residues Lys92 to Ala99 are Cytoplasmic-facing. The helical transmembrane segment at Gly100–Ile120 threads the bilayer. The Periplasmic portion of the chain corresponds to Tyr121–Gly141. A helical membrane pass occupies residues Phe142–Ile162. Topologically, residues Met163–Leu185 are cytoplasmic. Residues Phe186–Val206 form a helical membrane-spanning segment. Leu207 is a topological domain (periplasmic).

This sequence belongs to the cytochrome c oxidase subunit 3 family. Heterooctamer of two A chains, two B chains, two C chains and two D chains.

Its subcellular location is the cell inner membrane. In terms of biological role, cytochrome bo(3) ubiquinol terminal oxidase is the component of the aerobic respiratory chain of E.coli that predominates when cells are grown at high aeration. Has proton pump activity across the membrane in addition to electron transfer, pumping 2 protons/electron. This chain is Cytochrome bo(3) ubiquinol oxidase subunit 3 (cyoC), found in Pseudomonas putida (Arthrobacter siderocapsulatus).